A 491-amino-acid chain; its full sequence is UDP-N-acetylmuramate--L-alanine ligase (491 aa).

126-132 (GTHGKTT) contributes to the ATP binding site.

It belongs to the MurCDEF family.

The protein localises to the cytoplasm. It carries out the reaction UDP-N-acetyl-alpha-D-muramate + L-alanine + ATP = UDP-N-acetyl-alpha-D-muramoyl-L-alanine + ADP + phosphate + H(+). It functions in the pathway cell wall biogenesis; peptidoglycan biosynthesis. Cell wall formation. The chain is UDP-N-acetylmuramate--L-alanine ligase from Enterobacter sp. (strain 638).